The chain runs to 211 residues: FMN-dependent NADH:quinone oxidoreductase (211 aa).

FMN-binding positions include Ser-10, Ser-16–Ser-18, and Thr-138–Gly-141.

It belongs to the azoreductase type 1 family. Homodimer. Requires FMN as cofactor.

It carries out the reaction 2 a quinone + NADH + H(+) = 2 a 1,4-benzosemiquinone + NAD(+). It catalyses the reaction N,N-dimethyl-1,4-phenylenediamine + anthranilate + 2 NAD(+) = 2-(4-dimethylaminophenyl)diazenylbenzoate + 2 NADH + 2 H(+). Quinone reductase that provides resistance to thiol-specific stress caused by electrophilic quinones. Its function is as follows. Also exhibits azoreductase activity. Catalyzes the reductive cleavage of the azo bond in aromatic azo compounds to the corresponding amines. The chain is FMN-dependent NADH:quinone oxidoreductase from Frankia alni (strain DSM 45986 / CECT 9034 / ACN14a).